The sequence spans 449 residues: MKFTQRLSLRVRLTLIFLILASVTWLLSSFVAWKQTTDNVDELFDTQLMLFAKRLSTLDLNEINAADRMAQTPNKLKHGHVDDDALTFAIFTHDGRMVLNDGDNGEDIPYSYQREGFADGQLVGDKDQWRFVWMTSPDGKYRIVVGQEWEYREDMALAIVAGQLIPWLVALPVMLIIMMVLLGRELAPLNKLALALRMRDPDSEKPLNATGVPSEVRPLVESLNQLFARTHAMMVRERRFTSDAAHELRSPLTALKVQTEVAQLSDDDPQARKKALLQLHSGIDRATRLVDQLLTLSRLDSLDNLQDVAEIPLEDLLQSSVMDIYHTAQQAKIDVRLTLNVQGIKRTGQPLLLSLLVRNLLDNAVRYSPQGSVVDVTLNADNFIVRDNGPGVTPEALARIGERFYRPPGQTATGSGLGLSIVQRIAKLHGMNVEFGNAEQGGFEAKVSW.

The Cytoplasmic portion of the chain corresponds to 1–12 (MKFTQRLSLRVR). A helical membrane pass occupies residues 13 to 33 (LTLIFLILASVTWLLSSFVAW). Residues 34 to 156 (KQTTDNVDEL…QEWEYREDMA (123 aa)) are Periplasmic-facing. Residues 157 to 177 (LAIVAGQLIPWLVALPVMLII) traverse the membrane as a helical segment. At 178–449 (MMVLLGRELA…QGGFEAKVSW (272 aa)) the chain is on the cytoplasmic side. A Histidine kinase domain is found at 243-449 (DAAHELRSPL…QGGFEAKVSW (207 aa)). At H246 the chain carries Phosphohistidine; by autocatalysis.

It localises to the cell inner membrane. It catalyses the reaction ATP + protein L-histidine = ADP + protein N-phospho-L-histidine.. Its function is as follows. Member of a two-component regulatory system QseB/QseC. Activates the flagella regulon by activating transcription of FlhDC. May activate QseB by phosphorylation. This Escherichia coli O157:H7 protein is Sensor protein QseC (qseC).